The following is a 315-amino-acid chain: Outer membrane protease IcsP (315 aa).

The first 20 residues, 1–20 (MKLKFFVLALCVPAIFTTHA), serve as a signal peptide directing secretion. Active-site residues include Asp-103, Asp-105, Asp-230, and His-232.

This sequence belongs to the peptidase A26 family.

The protein resides in the cell outer membrane. Functionally, protease responsible for the cleavage of IcsA between 'Arg-758' and 'Arg-759', removing the entire alpha domain from IscA localized on the bacterial surface. This proteolytic activity contributes to the maintenance of a tight polar cap of IcsA, which is important to Shigella actin-based motility. The protein is Outer membrane protease IcsP (icsP) of Shigella flexneri.